A 583-amino-acid polypeptide reads, in one-letter code: Scarecrow-like protein 30 (583 aa).

2 disordered regions span residues 107–154 and 182–205; these read GDLE…RKSK and EATE…KSDQ. The segment covering 115–124 has biased composition (polar residues); that stretch reads GNFSSITSLH. Residues 131–140 are compositionally biased toward basic and acidic residues; the sequence is ESTRRYRHRD. Residues 200-579 enclose the GRAS domain; that stretch reads QQKSDQPVDM…RVLYAVSCWK (380 aa). The interval 207-266 is leucine repeat I (LRI); the sequence is VDMRNLLMQCAQAVASFDQRRAFEKLKEIREHSSRHGDATQRLGYHFAEALEARITGTMT. The VHIID stretch occupies residues 285 to 350; the sequence is YKGFVQACPT…IGPPLLRVTG (66 aa). The VHIID signature appears at 316 to 320; that stretch reads LHIID. Positions 366-398 are leucine repeat II (LRII); it reads ETGRRLKRFCDKFNVPFEYSFIAKNWENITLDD. Residues 407–501 form a PFYRE region; it reads TVVNCILRLQ…RELIIRDAMS (95 aa). The SAW stretch occupies residues 504–579; the sequence is ACEGSERFAR…RVLYAVSCWK (76 aa).

The protein belongs to the GRAS family. In terms of assembly, interacts with SNRNP35 and CYP95. In terms of tissue distribution, expressed in seedlings, leaves, sepals, stamen and pistil, and in the quiescent center of root meristem.

Its subcellular location is the nucleus. Functionally, probable transcription factor involved in plant development. This Arabidopsis thaliana (Mouse-ear cress) protein is Scarecrow-like protein 30 (SCL30).